Here is a 467-residue protein sequence, read N- to C-terminus: UPF0236 protein TTE0033/TTE0744/TTE0838/TTE0852/TTE1082/TTE1247/TTE1519/TTE1678/TTE1739/TTE1823/TTE2212 (467 aa).

The protein belongs to the UPF0236 family.

The sequence is that of UPF0236 protein TTE0033/TTE0744/TTE0838/TTE0852/TTE1082/TTE1247/TTE1519/TTE1678/TTE1739/TTE1823/TTE2212 from Caldanaerobacter subterraneus subsp. tengcongensis (strain DSM 15242 / JCM 11007 / NBRC 100824 / MB4) (Thermoanaerobacter tengcongensis).